Reading from the N-terminus, the 326-residue chain is DnaJ homolog subfamily B member 6 (326 aa).

The region spanning 3-69 (DYYEVLGVQK…KKRDIYDRFG (67 aa)) is the J domain. Positions 249 to 326 (ALPFQPTNTR…KKKKSTKGSY (78 aa)) are disordered. Ser277 carries the post-translational modification Phosphoserine.

In terms of assembly, homooligomer.

The protein localises to the cytoplasm. The protein resides in the perinuclear region. It localises to the nucleus. Functionally, has a stimulatory effect on the ATPase activity of HSP70 in a dose-dependent and time-dependent manner and hence acts as a co-chaperone of HSP70. Plays an indispensable role in the organization of KRT8/KRT18 filaments. Acts as an endogenous molecular chaperone for neuronal proteins including huntingtin. Suppresses aggregation and toxicity of polyglutamine-containing, aggregation-prone proteins. Also reduces cellular toxicity and caspase-3 activity. This is DnaJ homolog subfamily B member 6 from Gallus gallus (Chicken).